Reading from the N-terminus, the 920-residue chain is Puromycin-sensitive aminopeptidase (920 aa).

Substrate contacts are provided by residues glutamate 181 and 317-321; that span reads GAMEN. Residue histidine 353 coordinates Zn(2+). The active-site Proton acceptor is the glutamate 354. Histidine 357 and glutamate 376 together coordinate Zn(2+). Tyrosine 465 carries the post-translational modification 3'-nitrotyrosine. Residues 727–731 carry the Nuclear localization signal motif; the sequence is RRRFK.

Belongs to the peptidase M1 family. As to quaternary structure, monomer. Zn(2+) serves as cofactor. Widely expressed. Highest expression in brain, particularly the striatum and hippocampus. Expressed in Sertoli cells.

The protein resides in the cytoplasm. It localises to the cytosol. It is found in the nucleus. It catalyses the reaction Release of an N-terminal amino acid, preferentially alanine, from a wide range of peptides, amides and arylamides.. Strongly inhibited by bestatin, leuhistin, actinonin, amastatin, 1,10-phenanthroline, DFP, PCMBS, Zn(2+), Cd(2+), Co(2+), Cu(2+), Hg(2+), EDTA and puromycin. Not inhibited by PMSF, and only slightly inhibited by leupeptin and aprotinin. Activity is increased by Mg(2+) and Ca(2+). Functionally, aminopeptidase with broad substrate specificity for several peptides. Involved in proteolytic events essential for cell growth and viability. May act as regulator of neuropeptide activity. Plays a role in the antigen-processing pathway for MHC class I molecules. Involved in the N-terminal trimming of cytotoxic T-cell epitope precursors. Digests the poly-Q peptides found in many cellular proteins. The protein is Puromycin-sensitive aminopeptidase (Npepps) of Mus musculus (Mouse).